Here is a 185-residue protein sequence, read N- to C-terminus: NADH-dependent FMN reductase AsuE2 (185 aa).

Positions 1 to 13 (MSTHTARRAGATA) are enriched in low complexity. The tract at residues 1–24 (MSTHTARRAGATAGHDRDRGTEPG) is disordered. The span at 14–24 (GHDRDRGTEPG) shows a compositional bias: basic and acidic residues.

It belongs to the non-flavoprotein flavin reductase family. Does not interact with AsuE1, suggesting a possible transient interaction between the two enzymes instead of formation of a stable complex.

It carries out the reaction FMNH2 + NAD(+) = FMN + NADH + 2 H(+). The protein operates within antibiotic biosynthesis. Its function is as follows. Involved in the biosynthesis of the antibiotic asukamycin. When flavin concentration is low, AsuE2 assists the protoasukamycin 4-monooxygenase AsuE1 by providing a reduced form of flavin, enhancing AsuE1 activity. The protein is NADH-dependent FMN reductase AsuE2 of Streptomyces nodosus subsp. asukaensis.